The chain runs to 120 residues: Prophage bactoprenol-linked glucose translocase homolog (120 aa).

At Met-1 to Thr-9 the chain is on the cytoplasmic side. A helical membrane pass occupies residues Ser-10–Ala-30. The Periplasmic segment spans residues His-31–Asn-33. Residues Gln-34 to Ala-54 form a helical membrane-spanning segment. Over Lys-55–Thr-64 the chain is Cytoplasmic. Residues Met-65 to Ala-85 form a helical membrane-spanning segment. Residues Asp-86–Cys-88 lie on the Periplasmic side of the membrane. The helical transmembrane segment at Ala-89–Val-109 threads the bilayer. The Cytoplasmic segment spans residues Tyr-110–Lys-120.

Belongs to the GtrA family.

The protein resides in the cell inner membrane. Involved in O antigen modification. Involved in the translocation of bactoprenol-linked glucose across the cytoplasmic membrane. This is Prophage bactoprenol-linked glucose translocase homolog (yfdG) from Escherichia coli (strain K12).